The sequence spans 655 residues: MMLGAVRRYGVVHALRASVPRTICRPSNSQLLRCQTSPVTACPQSVRLLHKSSPFFSSASAQAQAQPDDLQSAAPQEPLREFTDLAERGLVDPKIIRAIVKDMNIKTMTDVQSQTLREILQGDDVLAQAKTGTGKTLAFLTPVFQNIMKDPSLKGLNWRRSQASSSDIRAIIISPTRELAEQIAVEARRLAAHSGVIVQTAVGGTQKREGLRRIQREGCHVLIGTPGRLKDVLSDSYNGVTAPNLSTLVLDEADRLLDDGFSDAIIDIQRLLPDPMKVDRQTLMFSATVPREVMQMVRKTMKPNFKFVKTVRDDEVPTHLTVPQKYVILRGYENAMPALLEFVTKYVEGEKENPNQRPFKAIVYFNSTVQTNLVYETFRNIVEQRHHPLRRVRVYEIHSQLTQARRTRSSDFFRAAKSAILFSSDVTARGMDFPDVTHVIQVSIPRDRATYIHRLGRTARANKTGEGWVLTHRGELPEFLKQLEGIPLNLDKETFATATVDMTKPELDPKSPATRFIQEIKDAVREVPESLKRRAYTSLLGPLRGYFARKQDLIQAINNCVVHGYGLPVPPQLSPTLARNLGLDRVPGVRIANYRGSSDNMSTRPDYRGGDRDMWASNSRRGREFNSDRRESRFGNHRNADDFFGGRRRAYRDDY.

Residues 1–56 (MMLGAVRRYGVVHALRASVPRTICRPSNSQLLRCQTSPVTACPQSVRLLHKSSPFF) constitute a mitochondrion transit peptide. The Q motif motif lies at 84-113 (DLAERGLVDPKIIRAIVKDMNIKTMTDVQS). Positions 116–307 (LREILQGDDV…RKTMKPNFKF (192 aa)) constitute a Helicase ATP-binding domain. 129-136 (AKTGTGKT) contributes to the ATP binding site. The DEAD box signature appears at 251-254 (DEAD). Residues 341–503 (EFVTKYVEGE…TFATATVDMT (163 aa)) enclose the Helicase C-terminal domain. Residues 594–642 (YRGSSDNMSTRPDYRGGDRDMWASNSRRGREFNSDRRESRFGNHRNADD) are disordered. Basic and acidic residues-rich tracts occupy residues 605–614 (PDYRGGDRDM) and 621–642 (RGRE…NADD).

It belongs to the DEAD box helicase family. DDX18/HAS1 subfamily.

Its subcellular location is the mitochondrion matrix. The catalysed reaction is ATP + H2O = ADP + phosphate + H(+). Its function is as follows. ATP-dependent RNA helicase required for mitochondrial splicing of group I and II introns. Also required for efficient mitochondrial translation. This Aspergillus fumigatus (strain ATCC MYA-4609 / CBS 101355 / FGSC A1100 / Af293) (Neosartorya fumigata) protein is ATP-dependent RNA helicase mss116, mitochondrial (mss116).